The primary structure comprises 191 residues: Protein GrpE (191 aa).

Basic and acidic residues-rich tracts occupy residues 1–19 and 29–45; these read MKDE…EPES and QQGE…GEIK. Residues 1–45 form a disordered region; it reads MKDEHNQEHDHLSPKEPESYQKAYACKEQQGEEKQEASEKEGEIK.

This sequence belongs to the GrpE family. In terms of assembly, homodimer.

Its subcellular location is the cytoplasm. Functionally, participates actively in the response to hyperosmotic and heat shock by preventing the aggregation of stress-denatured proteins, in association with DnaK and GrpE. It is the nucleotide exchange factor for DnaK and may function as a thermosensor. Unfolded proteins bind initially to DnaJ; upon interaction with the DnaJ-bound protein, DnaK hydrolyzes its bound ATP, resulting in the formation of a stable complex. GrpE releases ADP from DnaK; ATP binding to DnaK triggers the release of the substrate protein, thus completing the reaction cycle. Several rounds of ATP-dependent interactions between DnaJ, DnaK and GrpE are required for fully efficient folding. This chain is Protein GrpE, found in Helicobacter pylori (strain J99 / ATCC 700824) (Campylobacter pylori J99).